A 509-amino-acid chain; its full sequence is Putative thymidine phosphorylase (509 aa).

It belongs to the thymidine/pyrimidine-nucleoside phosphorylase family. Type 2 subfamily.

It carries out the reaction thymidine + phosphate = 2-deoxy-alpha-D-ribose 1-phosphate + thymine. This chain is Putative thymidine phosphorylase, found in Bradyrhizobium sp. (strain ORS 278).